A 594-amino-acid polypeptide reads, in one-letter code: F-box/LRR-repeat protein At3g58980 (594 aa).

The 49-residue stretch at 1–49 (MDRISNLPNEIICHIVSFLSAKEAAFASILSKRWRNLFTIVIKLQFDDS) folds into the F-box domain. LRR repeat units lie at residues 103–125 (ILDLKLDICAGRRYSLPLEVFTC), 128–151 (LVKLELGSDFGGFVVDLVPEDAFL), 152–174 (PALETLLLNYIRFKDLRRCAFEK), 203–218 (SPTLERLTISHVDLYE), 219–242 (CEFTRINLDTPNLTYLELSDAVPD), 249–272 (LDSLVEVKLDLTLMVDHKYHGYVD), 288–314 (LRNVEIMNLQSPNTFQAFSYFHEAIPV), 315–339 (FKNLYHLTITNNDTVIGFCWEFLPF), 344–369 (CPNLKTLVIDGPLHYNEDRPKSVCHC), 403–414 (LEKLSGLKLVKL), 415–437 (HSLTRFGSDKKKLLMLPRASSKC), 450–474 (LPSLKTLILDSVKFYDRCGCCAFQK), 503–518 (SQTLERLTIDHRYWAE), 519–541 (HNLESFTFDTPSLTYLDYNAHVP), and 584–594 (LRNVEILRLWM).

This Arabidopsis thaliana (Mouse-ear cress) protein is F-box/LRR-repeat protein At3g58980.